Reading from the N-terminus, the 606-residue chain is MVQGGSSISIRKKNFCIIAHIDHGKSTLADRFIQKAKIISDRDFKSQMLDSMDIERERGITIKSQAVTITYKSNDGDFYELNFVDTPGHVDFSYEVSRAISSCEGALLLIDASQGIQAQTVSNFYMAFEHDLEIIPVINKIDLPNANVDFVKKQIKNDLGLNEEIAISISAKNGIGIDDLLEAICKYVPSPRGSIKDPLRALIFDSHYDSYRGVVVHFRIFEGQIKMGDKIRLMHTNSEHLIEEIGIFKISLERKDTLEAGDVGYFIAGIKNISDVKIGDTVTLCDFPALSPLEGFKEVKPVVFSSVYPVDANQYDDLLKAMDRLKLNDASLTFEKDSSSALGHGFKCGFLGLLHLEVIQERIEREFNLNVILTSPSVRYKIIPKKGESYFIETPEQFPGNEAIESVLEPYIKANIIVPTEFLGNIMSVCLLKRGVQTNLIYLDTKRVELIYKMPLSEILFDFYDKIKSVSRGYASFDYELLDYEYTDLVRLDILVNGDRVDALSQLVFKDSARTKAIGICKKLKDEIARQQFRIAIQGAIGSNVIARETISPVRKDVTAKCYGGDITRKRKLLEKQKEGKKRMKMVGNVEIPQSAFLAVLKSNDN.

Residues 10–192 (IRKKNFCIIA…AICKYVPSPR (183 aa)) form the tr-type G domain. GTP contacts are provided by residues 22-27 (DHGKST) and 139-142 (NKID).

The protein belongs to the TRAFAC class translation factor GTPase superfamily. Classic translation factor GTPase family. LepA subfamily.

The protein resides in the cell inner membrane. The catalysed reaction is GTP + H2O = GDP + phosphate + H(+). Functionally, required for accurate and efficient protein synthesis under certain stress conditions. May act as a fidelity factor of the translation reaction, by catalyzing a one-codon backward translocation of tRNAs on improperly translocated ribosomes. Back-translocation proceeds from a post-translocation (POST) complex to a pre-translocation (PRE) complex, thus giving elongation factor G a second chance to translocate the tRNAs correctly. Binds to ribosomes in a GTP-dependent manner. The polypeptide is Elongation factor 4 (Borreliella burgdorferi (strain ATCC 35210 / DSM 4680 / CIP 102532 / B31) (Borrelia burgdorferi)).